A 368-amino-acid polypeptide reads, in one-letter code: Agmatine deiminase (368 aa).

Cysteine 357 serves as the catalytic Amidino-cysteine intermediate.

The protein belongs to the agmatine deiminase family. As to quaternary structure, homodimer.

It carries out the reaction agmatine + H2O = N-carbamoylputrescine + NH4(+). It functions in the pathway amine and polyamine biosynthesis; putrescine biosynthesis via agmatine pathway; N-carbamoylputrescine from agmatine: step 1/1. Functionally, mediates the hydrolysis of agmatine into N-carbamoylputrescine in the arginine decarboxylase (ADC) pathway of putrescine biosynthesis, a basic polyamine. The polypeptide is Agmatine deiminase (Pseudomonas savastanoi pv. phaseolicola (strain 1448A / Race 6) (Pseudomonas syringae pv. phaseolicola (strain 1448A / Race 6))).